A 289-amino-acid chain; its full sequence is tRNA pseudouridine synthase B (289 aa).

The active-site Nucleophile is aspartate 38.

It belongs to the pseudouridine synthase TruB family. Type 1 subfamily.

It carries out the reaction uridine(55) in tRNA = pseudouridine(55) in tRNA. In terms of biological role, responsible for synthesis of pseudouridine from uracil-55 in the psi GC loop of transfer RNAs. The protein is tRNA pseudouridine synthase B of Acaryochloris marina (strain MBIC 11017).